The sequence spans 282 residues: D-arabinitol 2-dehydrogenase [ribulose-forming] (282 aa).

NADP(+) is bound by residues leucine 32 and asparagine 53. The active-site Proton donor is the serine 170. Tyrosine 185, lysine 189, isoleucine 218, and threonine 220 together coordinate NADP(+). Tyrosine 185 acts as the Proton acceptor in catalysis. The Lowers pKa of active site Tyr role is filled by lysine 189.

This sequence belongs to the short-chain dehydrogenases/reductases (SDR) family.

The enzyme catalyses D-arabinitol + NAD(+) = D-ribulose + NADH + H(+). It functions in the pathway carbohydrate metabolism; D-arabinitol metabolism. Catalyzes the NAD(+)-dependent oxidation of D-arabinitol at carbon 4 to produce D-ribulose. The chain is D-arabinitol 2-dehydrogenase [ribulose-forming] (ARD) from Candida tropicalis (Yeast).